The following is a 206-amino-acid chain: 2-phospho-L-lactate guanylyltransferase (206 aa).

The protein belongs to the CofC family. In terms of assembly, homodimer.

The enzyme catalyses (2S)-2-phospholactate + GTP + H(+) = (2S)-lactyl-2-diphospho-5'-guanosine + diphosphate. It participates in cofactor biosynthesis; coenzyme F420 biosynthesis. Functionally, guanylyltransferase that catalyzes the activation of (2S)-2-phospholactate (2-PL) as (2S)-lactyl-2-diphospho-5'-guanosine, via the condensation of 2-PL with GTP. It is involved in the biosynthesis of coenzyme F420, a hydride carrier cofactor. The polypeptide is 2-phospho-L-lactate guanylyltransferase (Archaeoglobus profundus (strain DSM 5631 / JCM 9629 / NBRC 100127 / Av18)).